A 1117-amino-acid polypeptide reads, in one-letter code: RNA-directed RNA polymerase (1117 aa).

Polar residues predominate over residues M1–A17. A disordered region spans residues M1 to L23.

It catalyses the reaction RNA(n) + a ribonucleoside 5'-triphosphate = RNA(n+1) + diphosphate. Functionally, RNA-dependent RNA polymerase which replicates the viral genome. The sequence is that of RNA-directed RNA polymerase (p1) from Penicillium chrysogenum (Penicillium notatum).